The sequence spans 126 residues: Small ribosomal subunit protein uS13 (126 aa).

The segment at G95–K126 is disordered. Over residues A107 to K126 the composition is skewed to basic residues.

The protein belongs to the universal ribosomal protein uS13 family. In terms of assembly, part of the 30S ribosomal subunit. Forms a loose heterodimer with protein S19. Forms two bridges to the 50S subunit in the 70S ribosome.

Located at the top of the head of the 30S subunit, it contacts several helices of the 16S rRNA. In the 70S ribosome it contacts the 23S rRNA (bridge B1a) and protein L5 of the 50S subunit (bridge B1b), connecting the 2 subunits; these bridges are implicated in subunit movement. Contacts the tRNAs in the A and P-sites. The polypeptide is Small ribosomal subunit protein uS13 (Aquifex aeolicus (strain VF5)).